A 342-amino-acid polypeptide reads, in one-letter code: Elongation factor Ts (342 aa).

The tract at residues 79 to 82 (TDFV) is involved in Mg(2+) ion dislocation from EF-Tu.

This sequence belongs to the EF-Ts family.

It is found in the cytoplasm. Its function is as follows. Associates with the EF-Tu.GDP complex and induces the exchange of GDP to GTP. It remains bound to the aminoacyl-tRNA.EF-Tu.GTP complex up to the GTP hydrolysis stage on the ribosome. In Lactococcus lactis subsp. cremoris (strain MG1363), this protein is Elongation factor Ts.